Here is a 750-residue protein sequence, read N- to C-terminus: GRIP and coiled-coil domain-containing protein C27D7.02c (750 aa).

Disordered stretches follow at residues 14–53 (AQGQEEAKNRRRQFQEEDQLRRNNKSSNKLSQNEEDAKNM) and 188–280 (KTVE…RDIA). Basic and acidic residues-rich tracts occupy residues 18-34 (EEAKNRRRQFQEEDQLR) and 188-198 (KTVETKNDVPE). Residues 28 to 182 (QEEDQLRRNN…AQSIEQEVIS (155 aa)) adopt a coiled-coil conformation. Residues 201-213 (RPSTDTIGVSSAL) are compositionally biased toward polar residues. A coiled-coil region spans residues 213–243 (LSKKKKKRNRKNQKKKSTKQNIEATTENDAL). The span at 214-230 (SKKKKKRNRKNQKKKST) shows a compositional bias: basic residues. Over residues 233–251 (NIEATTENDALSESISTPD) the composition is skewed to polar residues. The span at 269 to 280 (ADSKEEERRDIA) shows a compositional bias: basic and acidic residues. A coiled-coil region spans residues 344 to 665 (KLVEELTKQL…YEHLQKSFKN (322 aa)). Residues 672–703 (KQQPSNHGRNSSVSRSSSSVEVNSKHPGSDDM) form a disordered region. The segment covering 676–693 (SNHGRNSSVSRSSSSVEV) has biased composition (low complexity). Basic and acidic residues predominate over residues 694–703 (NSKHPGSDDM). The region spanning 700–748 (SDDMLIDKEYTRNILFQFLEQRDRRPEIVNLLSILLDLSEEQKQKLLSV) is the GRIP domain.

It localises to the cytoplasm. In Schizosaccharomyces pombe (strain 972 / ATCC 24843) (Fission yeast), this protein is GRIP and coiled-coil domain-containing protein C27D7.02c.